The primary structure comprises 126 residues: UPF0102 protein HD_0802 (126 aa).

Belongs to the UPF0102 family.

The protein is UPF0102 protein HD_0802 of Haemophilus ducreyi (strain 35000HP / ATCC 700724).